We begin with the raw amino-acid sequence, 247 residues long: Nodulation protein H (247 aa).

The segment at 1-16 is hydrophobic; sequence MTHSTLPPRPFAILAM.

In terms of biological role, required for the formation of sulfated nod factor. Proposed to transfer activated sulfate (PAPS) to a N-acetylglucosamine of the nod factor. This is Nodulation protein H (nodH) from Rhizobium meliloti (Ensifer meliloti).